Here is a 370-residue protein sequence, read N- to C-terminus: Protein FAM110B (370 aa).

2 disordered regions span residues 127-151 (SSEG…RSEA) and 237-256 (KSPE…RPSL). A phosphoserine mark is found at Ser-238 and Ser-301. Residues 317–337 (DCEQSQDSNSDLRNDDSANDR) form a disordered region. Basic and acidic residues predominate over residues 326–335 (SDLRNDDSAN).

It belongs to the FAM110 family.

The protein resides in the cytoplasm. The protein localises to the cytoskeleton. Its subcellular location is the microtubule organizing center. It is found in the centrosome. The chain is Protein FAM110B (FAM110B) from Pongo abelii (Sumatran orangutan).